The sequence spans 592 residues: Cell division protein FtsZ (592 aa).

GTP-binding positions include 24-28 (GGGGN), 111-113 (GTG), E142, R146, and D190. Positions 333–362 (KFQKSVSSVRKNDSGINQTASHPQSSQLRS) are disordered.

This sequence belongs to the FtsZ family. In terms of assembly, homodimer. Polymerizes to form a dynamic ring structure in a strictly GTP-dependent manner. Interacts directly with several other division proteins.

It localises to the cytoplasm. Functionally, essential cell division protein that forms a contractile ring structure (Z ring) at the future cell division site. The regulation of the ring assembly controls the timing and the location of cell division. One of the functions of the FtsZ ring is to recruit other cell division proteins to the septum to produce a new cell wall between the dividing cells. Binds GTP and shows GTPase activity. The protein is Cell division protein FtsZ of Bartonella bacilliformis.